The following is a 157-amino-acid chain: Succinate dehydrogenase assembly factor 2-B, mitochondrial (157 aa).

A mitochondrion-targeting transit peptide spans 1–24; that stretch reads MLRQFLFSTASRRLVRPMIAPHRS.

It belongs to the SDHAF2 family. In terms of assembly, interacts with the flavoprotein subunit within the SDH catalytic dimer.

It is found in the mitochondrion matrix. Plays an essential role in the assembly of succinate dehydrogenase (SDH), an enzyme complex (also referred to as respiratory complex II) that is a component of both the tricarboxylic acid (TCA) cycle and the mitochondrial electron transport chain, and which couples the oxidation of succinate to fumarate with the reduction of ubiquinone (coenzyme Q) to ubiquinol. Required for flavinylation (covalent attachment of FAD) of the flavoprotein subunit of the SDH catalytic dimer. This is Succinate dehydrogenase assembly factor 2-B, mitochondrial from Drosophila persimilis (Fruit fly).